The following is a 321-amino-acid chain: Tetraacyldisaccharide 4'-kinase (321 aa).

54 to 61 (SVGGTGKT) contributes to the ATP binding site.

This sequence belongs to the LpxK family.

It catalyses the reaction a lipid A disaccharide + ATP = a lipid IVA + ADP + H(+). It participates in glycolipid biosynthesis; lipid IV(A) biosynthesis; lipid IV(A) from (3R)-3-hydroxytetradecanoyl-[acyl-carrier-protein] and UDP-N-acetyl-alpha-D-glucosamine: step 6/6. Functionally, transfers the gamma-phosphate of ATP to the 4'-position of a tetraacyldisaccharide 1-phosphate intermediate (termed DS-1-P) to form tetraacyldisaccharide 1,4'-bis-phosphate (lipid IVA). The protein is Tetraacyldisaccharide 4'-kinase of Rickettsia typhi (strain ATCC VR-144 / Wilmington).